Reading from the N-terminus, the 397-residue chain is S-adenosylmethionine synthase (397 aa).

H16 contacts ATP. D18 lines the Mg(2+) pocket. A K(+)-binding site is contributed by E44. Positions 57 and 100 each coordinate L-methionine. The tract at residues Q100–E110 is flexible loop. ATP is bound by residues D175–K177, R242–F243, D251, R257–K258, A274, and K278. L-methionine is bound at residue D251. K282 is an L-methionine binding site.

It belongs to the AdoMet synthase family. As to quaternary structure, homotetramer; dimer of dimers. The cofactor is Mg(2+). Requires K(+) as cofactor.

The protein resides in the cytoplasm. It carries out the reaction L-methionine + ATP + H2O = S-adenosyl-L-methionine + phosphate + diphosphate. The protein operates within amino-acid biosynthesis; S-adenosyl-L-methionine biosynthesis; S-adenosyl-L-methionine from L-methionine: step 1/1. Functionally, catalyzes the formation of S-adenosylmethionine (AdoMet) from methionine and ATP. The overall synthetic reaction is composed of two sequential steps, AdoMet formation and the subsequent tripolyphosphate hydrolysis which occurs prior to release of AdoMet from the enzyme. The chain is S-adenosylmethionine synthase from Streptococcus thermophilus (strain ATCC BAA-250 / LMG 18311).